A 134-amino-acid polypeptide reads, in one-letter code: Methylglyoxal synthase (134 aa).

Residues 1–134 (MHIALIAHDE…DWRDLRRNDE (134 aa)) form the MGS-like domain. Substrate is bound by residues His8, Lys12, 34-37 (TGTT), and 54-55 (SG). The Proton donor/acceptor role is filled by Asp60. His87 contributes to the substrate binding site.

This sequence belongs to the methylglyoxal synthase family.

It carries out the reaction dihydroxyacetone phosphate = methylglyoxal + phosphate. Functionally, catalyzes the formation of methylglyoxal from dihydroxyacetone phosphate. The protein is Methylglyoxal synthase of Listeria welshimeri serovar 6b (strain ATCC 35897 / DSM 20650 / CCUG 15529 / CIP 8149 / NCTC 11857 / SLCC 5334 / V8).